Here is a 96-residue protein sequence, read N- to C-terminus: Large ribosomal subunit protein eL14 (96 aa).

The protein belongs to the eukaryotic ribosomal protein eL14 family.

The chain is Large ribosomal subunit protein eL14 from Saccharolobus islandicus (strain Y.N.15.51 / Yellowstone #2) (Sulfolobus islandicus).